Here is a 389-residue protein sequence, read N- to C-terminus: Sterol methyltransferase-like 1 (389 aa).

A helical membrane pass occupies residues isoleucine 25–leucine 45.

Belongs to the class I-like SAM-binding methyltransferase superfamily. Erg6/SMT family.

The protein resides in the microsome membrane. Functionally, unable to convert squalene, botryococcene, cycloartenol, zymosterol or lanosterol to mono-, di-, tri- or tetramethylated derivatives. The protein is Sterol methyltransferase-like 1 (SMT-1) of Botryococcus braunii (Green alga).